Here is a 250-residue protein sequence, read N- to C-terminus: Ubiquinone/menaquinone biosynthesis C-methyltransferase UbiE (250 aa).

S-adenosyl-L-methionine is bound by residues Thr-73, Asp-94, 122 to 123 (NS), and Ser-139.

The protein belongs to the class I-like SAM-binding methyltransferase superfamily. MenG/UbiE family.

The enzyme catalyses a 2-demethylmenaquinol + S-adenosyl-L-methionine = a menaquinol + S-adenosyl-L-homocysteine + H(+). The catalysed reaction is a 2-methoxy-6-(all-trans-polyprenyl)benzene-1,4-diol + S-adenosyl-L-methionine = a 5-methoxy-2-methyl-3-(all-trans-polyprenyl)benzene-1,4-diol + S-adenosyl-L-homocysteine + H(+). It participates in quinol/quinone metabolism; menaquinone biosynthesis; menaquinol from 1,4-dihydroxy-2-naphthoate: step 2/2. Its pathway is cofactor biosynthesis; ubiquinone biosynthesis. Methyltransferase required for the conversion of demethylmenaquinol (DMKH2) to menaquinol (MKH2) and the conversion of 2-polyprenyl-6-methoxy-1,4-benzoquinol (DDMQH2) to 2-polyprenyl-3-methyl-6-methoxy-1,4-benzoquinol (DMQH2). The polypeptide is Ubiquinone/menaquinone biosynthesis C-methyltransferase UbiE (Wigglesworthia glossinidia brevipalpis).